A 391-amino-acid chain; its full sequence is UPF0229 protein BCG9842_B4751 (391 aa).

A compositionally biased stretch (polar residues) spans 1–16 (MGEENQPNYTISQENW). Disordered regions lie at residues 1–31 (MGEENQPNYTISQENWSLHRKGYDDQQRHQE) and 80–117 (HVGQGNGDSKVGDVVARDGSGGQKQKGPGKGQGAGDAA). Over residues 21–31 (KGYDDQQRHQE) the composition is skewed to basic and acidic residues. A compositionally biased stretch (gly residues) spans 98 to 115 (GSGGQKQKGPGKGQGAGD).

The protein belongs to the UPF0229 family.

The chain is UPF0229 protein BCG9842_B4751 from Bacillus cereus (strain G9842).